Here is a 263-residue protein sequence, read N- to C-terminus: HTH-type transcriptional repressor NanR (263 aa).

The segment at 1-24 is disordered; that stretch reads MSPMNAFDSQTEDSSPAIGRNLRS. Residues 30–98 enclose the HTH gntR-type domain; it reads KKLSEMVEEE…NGERARVSRP (69 aa). A DNA-binding region (H-T-H motif) is located at residues 58-77; sequence ERELMAFFNVGRPSVREALA.

This sequence belongs to the NanR family.

Functionally, transcriptional repressor that controls expression of the genes required for the catabolism of sialic acids. This Escherichia coli O127:H6 (strain E2348/69 / EPEC) protein is HTH-type transcriptional repressor NanR.